Reading from the N-terminus, the 265-residue chain is 3-methyl-2-oxobutanoate hydroxymethyltransferase (265 aa).

Residues Asp45 and Asp84 each coordinate Mg(2+). Residues 45 to 46 (DS), Asp84, and Lys112 each bind 3-methyl-2-oxobutanoate. Glu114 contacts Mg(2+). Residue Glu181 is the Proton acceptor of the active site.

It belongs to the PanB family. In terms of assembly, homodecamer; pentamer of dimers. Mg(2+) serves as cofactor.

The protein localises to the cytoplasm. It catalyses the reaction 3-methyl-2-oxobutanoate + (6R)-5,10-methylene-5,6,7,8-tetrahydrofolate + H2O = 2-dehydropantoate + (6S)-5,6,7,8-tetrahydrofolate. It functions in the pathway cofactor biosynthesis; (R)-pantothenate biosynthesis; (R)-pantoate from 3-methyl-2-oxobutanoate: step 1/2. Its function is as follows. Catalyzes the reversible reaction in which hydroxymethyl group from 5,10-methylenetetrahydrofolate is transferred onto alpha-ketoisovalerate to form ketopantoate. The sequence is that of 3-methyl-2-oxobutanoate hydroxymethyltransferase from Wigglesworthia glossinidia brevipalpis.